The chain runs to 147 residues: D-aminoacyl-tRNA deacylase (147 aa).

The Gly-cisPro motif, important for rejection of L-amino acids signature appears at 136 to 137 (GP).

Belongs to the DTD family. Homodimer.

The protein localises to the cytoplasm. The catalysed reaction is glycyl-tRNA(Ala) + H2O = tRNA(Ala) + glycine + H(+). It carries out the reaction a D-aminoacyl-tRNA + H2O = a tRNA + a D-alpha-amino acid + H(+). Its function is as follows. An aminoacyl-tRNA editing enzyme that deacylates mischarged D-aminoacyl-tRNAs. Also deacylates mischarged glycyl-tRNA(Ala), protecting cells against glycine mischarging by AlaRS. Acts via tRNA-based rather than protein-based catalysis; rejects L-amino acids rather than detecting D-amino acids in the active site. By recycling D-aminoacyl-tRNA to D-amino acids and free tRNA molecules, this enzyme counteracts the toxicity associated with the formation of D-aminoacyl-tRNA entities in vivo and helps enforce protein L-homochirality. The sequence is that of D-aminoacyl-tRNA deacylase from Streptococcus uberis (strain ATCC BAA-854 / 0140J).